A 332-amino-acid polypeptide reads, in one-letter code: 5-dehydro-2-deoxygluconokinase (332 aa).

The protein belongs to the carbohydrate kinase PfkB family.

It carries out the reaction 5-dehydro-2-deoxy-D-gluconate + ATP = 6-phospho-5-dehydro-2-deoxy-D-gluconate + ADP + H(+). It participates in polyol metabolism; myo-inositol degradation into acetyl-CoA; acetyl-CoA from myo-inositol: step 5/7. Catalyzes the phosphorylation of 5-dehydro-2-deoxy-D-gluconate (2-deoxy-5-keto-D-gluconate or DKG) to 6-phospho-5-dehydro-2-deoxy-D-gluconate (DKGP). This Bacillus thuringiensis (strain Al Hakam) protein is 5-dehydro-2-deoxygluconokinase.